A 367-amino-acid polypeptide reads, in one-letter code: Chorismate synthase (367 aa).

R48 contributes to the NADP(+) binding site. Residues 125–127 (RSS), 243–244 (NA), G283, 298–302 (KPTSS), and R324 contribute to the FMN site.

The protein belongs to the chorismate synthase family. In terms of assembly, homotetramer. It depends on FMNH2 as a cofactor.

The enzyme catalyses 5-O-(1-carboxyvinyl)-3-phosphoshikimate = chorismate + phosphate. Its pathway is metabolic intermediate biosynthesis; chorismate biosynthesis; chorismate from D-erythrose 4-phosphate and phosphoenolpyruvate: step 7/7. In terms of biological role, catalyzes the anti-1,4-elimination of the C-3 phosphate and the C-6 proR hydrogen from 5-enolpyruvylshikimate-3-phosphate (EPSP) to yield chorismate, which is the branch point compound that serves as the starting substrate for the three terminal pathways of aromatic amino acid biosynthesis. This reaction introduces a second double bond into the aromatic ring system. This chain is Chorismate synthase, found in Psychrobacter sp. (strain PRwf-1).